The sequence spans 176 residues: MDLPGPIHDILLVFLGSGLILGGLGVVLLTNPIYSAFSLGLVLVCISLFHIPSNSYFVAAAQLLIYVGAVNVLIVFAVMFMNGSEYSKDLYLWTVGDGVTSLVCTSILFSLITTISDTSWYGIIWTTRSNQIIEQDLTSNVQQIGIHLSTDFYLPFELISIILLVALIGAISMARQ.

Helical transmembrane passes span 10-30, 32-52, 61-81, 92-112, and 152-172; these read ILLV…VLLT, PIYS…FHIP, AQLL…VMFM, LWTV…FSLI, and FYLP…GAIS.

The protein belongs to the complex I subunit 6 family. In terms of assembly, NDH is composed of at least 16 different subunits, 5 of which are encoded in the nucleus.

The protein localises to the plastid. It localises to the chloroplast thylakoid membrane. It catalyses the reaction a plastoquinone + NADH + (n+1) H(+)(in) = a plastoquinol + NAD(+) + n H(+)(out). The catalysed reaction is a plastoquinone + NADPH + (n+1) H(+)(in) = a plastoquinol + NADP(+) + n H(+)(out). Its function is as follows. NDH shuttles electrons from NAD(P)H:plastoquinone, via FMN and iron-sulfur (Fe-S) centers, to quinones in the photosynthetic chain and possibly in a chloroplast respiratory chain. The immediate electron acceptor for the enzyme in this species is believed to be plastoquinone. Couples the redox reaction to proton translocation, and thus conserves the redox energy in a proton gradient. This Liriodendron tulipifera (Tuliptree) protein is NAD(P)H-quinone oxidoreductase subunit 6, chloroplastic (ndhG).